Here is a 250-residue protein sequence, read N- to C-terminus: Triosephosphate isomerase (250 aa).

Residue 9–11 (NWK) participates in substrate binding. The Electrophile role is filled by H96. E168 (proton acceptor) is an active-site residue. Residues G174, S216, and 237 to 238 (GG) contribute to the substrate site.

Belongs to the triosephosphate isomerase family. As to quaternary structure, homodimer.

Its subcellular location is the cytoplasm. The catalysed reaction is D-glyceraldehyde 3-phosphate = dihydroxyacetone phosphate. The protein operates within carbohydrate biosynthesis; gluconeogenesis. Its pathway is carbohydrate degradation; glycolysis; D-glyceraldehyde 3-phosphate from glycerone phosphate: step 1/1. In terms of biological role, involved in the gluconeogenesis. Catalyzes stereospecifically the conversion of dihydroxyacetone phosphate (DHAP) to D-glyceraldehyde-3-phosphate (G3P). The polypeptide is Triosephosphate isomerase (Leptospira interrogans serogroup Icterohaemorrhagiae serovar Lai (strain 56601)).